Here is a 245-residue protein sequence, read N- to C-terminus: Adapter protein MecA (245 aa).

The protein belongs to the MecA family. In terms of assembly, homodimer.

In terms of biological role, enables the recognition and targeting of unfolded and aggregated proteins to the ClpC protease or to other proteins involved in proteolysis. This Streptococcus pneumoniae (strain ATCC BAA-255 / R6) protein is Adapter protein MecA.